Here is a 105-residue protein sequence, read N- to C-terminus: Large ribosomal subunit protein uL24 (105 aa).

The protein belongs to the universal ribosomal protein uL24 family. In terms of assembly, part of the 50S ribosomal subunit.

One of two assembly initiator proteins, it binds directly to the 5'-end of the 23S rRNA, where it nucleates assembly of the 50S subunit. Its function is as follows. One of the proteins that surrounds the polypeptide exit tunnel on the outside of the subunit. This is Large ribosomal subunit protein uL24 from Parvibaculum lavamentivorans (strain DS-1 / DSM 13023 / NCIMB 13966).